A 309-amino-acid chain; its full sequence is Probable manganese-dependent inorganic pyrophosphatase (309 aa).

Residues His-9, Asp-13, Asp-15, Asp-75, His-97, and Asp-149 each coordinate Mn(2+).

Belongs to the PPase class C family. Mn(2+) is required as a cofactor.

It is found in the cytoplasm. It carries out the reaction diphosphate + H2O = 2 phosphate + H(+). This chain is Probable manganese-dependent inorganic pyrophosphatase, found in Bacillus licheniformis (strain ATCC 14580 / DSM 13 / JCM 2505 / CCUG 7422 / NBRC 12200 / NCIMB 9375 / NCTC 10341 / NRRL NRS-1264 / Gibson 46).